The sequence spans 391 residues: Homocysteine-responsive endoplasmic reticulum-resident ubiquitin-like domain member 1 protein (391 aa).

M1 carries the post-translational modification N-acetylmethionine. Residues M1–D263 lie on the Cytoplasmic side of the membrane. A Ubiquitin-like domain is found at V10 to L72. Residues K100 to R126 form a disordered region. The segment covering N112 to G124 has biased composition (polar residues). The tract at residues Q115–S200 is interaction with UBQLN1. S135 is modified (phosphoserine). Positions L170–A190 are interaction with SYVN1. Residues W264–Y284 traverse the membrane as a helical segment. Residues S285–R289 lie on the Lumenal side of the membrane. Residues F290 to F310 form a helical membrane-spanning segment. The Cytoplasmic portion of the chain corresponds to R311 to N391. The interval F318–G359 is disordered. Basic and acidic residues predominate over residues D346–L357.

In terms of assembly, interacts with PSEN1 and PSEN2. Interacts with UBXN6. Interacts with UBQLN1, UBQLN2 and UBQLN4. Component of the HRD1 complex, which comprises at least SYNV1/HRD1, FAM8A1, HERPUD1/HERP, OS9, SEL1L and UBE2J1. FAM8A1 binding to SYNV1 may promote recruitment of HERPUD1 to the HRD1 complex. Widely expressed; in the brain, expression seems to be restricted to neurons and vascular smooth muscle cells. Present in activated microglia in senile plaques in the brain of patients with Alzheimer disease.

It is found in the endoplasmic reticulum membrane. Its function is as follows. Component of the endoplasmic reticulum quality control (ERQC) system also called ER-associated degradation (ERAD) involved in ubiquitin-dependent degradation of misfolded endoplasmic reticulum proteins. Could enhance presenilin-mediated amyloid-beta protein 40 generation. Binds to ubiquilins and this interaction is required for efficient degradation of CD3D via the ERAD pathway. This Homo sapiens (Human) protein is Homocysteine-responsive endoplasmic reticulum-resident ubiquitin-like domain member 1 protein (HERPUD1).